The primary structure comprises 448 residues: Probable glycine dehydrogenase (decarboxylating) subunit 1 (448 aa).

It belongs to the GcvP family. N-terminal subunit subfamily. The glycine cleavage system is composed of four proteins: P, T, L and H. In this organism, the P 'protein' is a heterodimer of two subunits.

It carries out the reaction N(6)-[(R)-lipoyl]-L-lysyl-[glycine-cleavage complex H protein] + glycine + H(+) = N(6)-[(R)-S(8)-aminomethyldihydrolipoyl]-L-lysyl-[glycine-cleavage complex H protein] + CO2. Its function is as follows. The glycine cleavage system catalyzes the degradation of glycine. The P protein binds the alpha-amino group of glycine through its pyridoxal phosphate cofactor; CO(2) is released and the remaining methylamine moiety is then transferred to the lipoamide cofactor of the H protein. The chain is Probable glycine dehydrogenase (decarboxylating) subunit 1 from Staphylococcus carnosus (strain TM300).